A 525-amino-acid polypeptide reads, in one-letter code: Pre-mRNA-processing factor 19 homolog 2 (525 aa).

The U-box domain occupies 1-70 (MNCAISGEVP…PKTLHTASIP (70 aa)). 7 WD repeats span residues 220–261 (TNKP…STLT), 262–301 (GHSKKVTSVKFVGDSDLVLTASADKTVRIWRNPGDGNYAC), 307–346 (DHSAEVRAVTVHPTNKYFVSASLDGTWCFYDLSSGSCLAQ), 351–390 (SKNVDYTAAAFHPDGLILGTGTSQSVVKIWDVKSQANVAK), 393–431 (GHTGEVTAISFSENGYFLATAAEDGVRLWDLRKLRNFKS), 433–469 (LSADANSVEFDPSGSYLGIAASDIKVYQTASVKAEWN), and 478–517 (SGTGKATCVKFGSDAQYVAVGSMDRNLRIFGLPGDEKANV). The DWD box signature appears at 409–424 (FLATAAEDGVRLWDLR).

Belongs to the WD repeat PRP19 family. As to quaternary structure, homotetramer. Component of the multiprotein assembly MOS4-associated complex (MAC) at least composed of MOS4, CDC5, PRL1 and PRP19 which is related to the PRP19C/Prp19 complex/NTC/Nineteen complex identified in other organisms. Associated with the spliceosome.

Its subcellular location is the nucleus. It carries out the reaction S-ubiquitinyl-[E2 ubiquitin-conjugating enzyme]-L-cysteine + [acceptor protein]-L-lysine = [E2 ubiquitin-conjugating enzyme]-L-cysteine + N(6)-ubiquitinyl-[acceptor protein]-L-lysine.. The protein operates within protein modification; protein ubiquitination. Its function is as follows. Probable ubiquitin-protein ligase which is mainly involved pre-mRNA splicing and DNA repair. Component of the MAC complex that probably regulates defense responses through transcriptional control and thereby is essential for plant innate immunity. This chain is Pre-mRNA-processing factor 19 homolog 2 (PRP19B), found in Arabidopsis thaliana (Mouse-ear cress).